The primary structure comprises 345 residues: Ribosomal RNA small subunit methyltransferase C (345 aa).

It belongs to the methyltransferase superfamily. RsmC family. In terms of assembly, monomer.

The protein localises to the cytoplasm. The enzyme catalyses guanosine(1207) in 16S rRNA + S-adenosyl-L-methionine = N(2)-methylguanosine(1207) in 16S rRNA + S-adenosyl-L-homocysteine + H(+). Functionally, specifically methylates the guanine in position 1207 of 16S rRNA in the 30S particle. The protein is Ribosomal RNA small subunit methyltransferase C of Shewanella denitrificans (strain OS217 / ATCC BAA-1090 / DSM 15013).